Consider the following 330-residue polypeptide: Beta-ketoacyl-[acyl-carrier-protein] synthase III (330 aa).

Catalysis depends on residues Cys-118 and His-257. The segment at 258 to 262 (QANLR) is ACP-binding. Asn-287 is an active-site residue.

The protein belongs to the thiolase-like superfamily. FabH family. In terms of assembly, homodimer.

The protein localises to the cytoplasm. The catalysed reaction is malonyl-[ACP] + acetyl-CoA + H(+) = 3-oxobutanoyl-[ACP] + CO2 + CoA. Its pathway is lipid metabolism; fatty acid biosynthesis. Catalyzes the condensation reaction of fatty acid synthesis by the addition to an acyl acceptor of two carbons from malonyl-ACP. Catalyzes the first condensation reaction which initiates fatty acid synthesis and may therefore play a role in governing the total rate of fatty acid production. Possesses both acetoacetyl-ACP synthase and acetyl transacylase activities. Its substrate specificity determines the biosynthesis of branched-chain and/or straight-chain of fatty acids. The protein is Beta-ketoacyl-[acyl-carrier-protein] synthase III of Nitratidesulfovibrio vulgaris (strain DSM 19637 / Miyazaki F) (Desulfovibrio vulgaris).